A 321-amino-acid polypeptide reads, in one-letter code: Olfactory receptor 5P60 (321 aa).

Residues 1–28 (MAFLHNGNHTAVTEFILLGLTDDPVLRI) lie on the Extracellular side of the membrane. Asparagine 8 is a glycosylation site (N-linked (GlcNAc...) asparagine). A helical transmembrane segment spans residues 29–49 (VLFTIILCIYLVTVSGNLSTI). Residues 50–57 (LLIRVSSQ) are Cytoplasmic-facing. Residues 58–78 (LHHPMYFFLSHLASADIGYSS) traverse the membrane as a helical segment. Residues 79-102 (SVTPNMLVNFLVKQNTISYIGCSI) are Extracellular-facing. A disulfide bridge links cysteine 100 with cysteine 192. A helical membrane pass occupies residues 103–123 (QFGSAAFFGGLECFLLAVMAY). The Cytoplasmic segment spans residues 124–136 (DRFVAICNPLLYS). Residues 137-157 (TKMSTQVCVQLVVGSYIGGFL) traverse the membrane as a helical segment. The Extracellular segment spans residues 158 to 199 (NASFATVSFLFLFFCGPNIINHFFCDFAPLIELSCSDVRISV). A helical transmembrane segment spans residues 200 to 220 (LVTSFSAGTVTMLTVLVIAIS). At 221-240 (YTYILITILKMRSTEGRHKA) the chain is on the cytoplasmic side. A helical membrane pass occupies residues 241–261 (FSTCTSHLTAVSLFYGTITFI). The Extracellular portion of the chain corresponds to 262-274 (YVMPKSRYSTDQN). Residues 275-295 (KVVSVFYMVVIPMLNPLIYSL) form a helical membrane-spanning segment. Topologically, residues 296-321 (RNNEIKGALRRHLGKKIFSQSNILFY) are cytoplasmic.

It belongs to the G-protein coupled receptor 1 family.

It is found in the cell membrane. Functionally, potential odorant receptor. The protein is Olfactory receptor 5P60 of Mus musculus (Mouse).